Here is a 495-residue protein sequence, read N- to C-terminus: Ribose import ATP-binding protein RbsA (495 aa).

2 ABC transporter domains span residues 7 to 242 (LEMR…VGRP) and 250 to 491 (ERDI…TGVN). An ATP-binding site is contributed by 39-46 (GENGAGKS).

Belongs to the ABC transporter superfamily. Ribose importer (TC 3.A.1.2.1) family. As to quaternary structure, the complex is composed of an ATP-binding protein (RbsA), two transmembrane proteins (RbsC) and a solute-binding protein (RbsB).

Its subcellular location is the cell inner membrane. It catalyses the reaction D-ribose(out) + ATP + H2O = D-ribose(in) + ADP + phosphate + H(+). In terms of biological role, part of the ABC transporter complex RbsABC involved in ribose import. Responsible for energy coupling to the transport system. This Shigella dysenteriae serotype 1 (strain Sd197) protein is Ribose import ATP-binding protein RbsA.